Consider the following 206-residue polypeptide: Two-component response regulator ORR7 (206 aa).

Residues 53 to 92 are disordered; the sequence is VVPLHDNASAEDDDDDEEDDDEDDDDDDDEDDEEEAAPPY. A compositionally biased stretch (acidic residues) spans 61-88; that stretch reads SAEDDDDDEEDDDEDDDDDDDEDDEEEA. The Response regulatory domain occupies 92-205; sequence YVMAVDDSSV…DISRITSRML (114 aa). Asp-138 is modified (4-aspartylphosphate).

Belongs to the ARR family. Type-A subfamily. Two-component system major event consists of a His-to-Asp phosphorelay between a sensor histidine kinase (HK) and a response regulator (RR). In plants, the His-to-Asp phosphorelay involves an additional intermediate named Histidine-containing phosphotransfer protein (HPt). This multistep phosphorelay consists of a His-Asp-His-Asp sequential transfer of a phosphate group between first a His and an Asp of the HK protein, followed by the transfer to a conserved His of the HPt protein and finally the transfer to an Asp in the receiver domain of the RR protein. Expressed in flowers, and at low levels in roots, mature leaves and shoots.

Functions as a response regulator involved in His-to-Asp phosphorelay signal transduction system. Phosphorylation of the Asp residue in the receiver domain activates the ability of the protein to promote the transcription of target genes. Type-A response regulators seem to act as negative regulators of the cytokinin signaling. In Oryza sativa subsp. indica (Rice), this protein is Two-component response regulator ORR7.